A 530-amino-acid polypeptide reads, in one-letter code: GH3 domain-containing protein (530 aa).

The first 17 residues, 1–17 (MLLWPLLLLLLLLPTLA), serve as a signal peptide directing secretion. Positions 99–122 (LTKASQTQQEDSGEQPLPPTSNQD) are disordered. N450 carries an N-linked (GlcNAc...) asparagine glycan. N5-methylglutamine is present on Q489.

This sequence belongs to the GH3 family. In terms of processing, methylated at Gln-489 by N6AMT1.

It is found in the endoplasmic reticulum. The protein localises to the nucleus envelope. The polypeptide is GH3 domain-containing protein (GHDC) (Homo sapiens (Human)).